We begin with the raw amino-acid sequence, 130 residues long: Large ribosomal subunit protein bL12c (130 aa).

Belongs to the bacterial ribosomal protein bL12 family. Homodimer. Part of the ribosomal stalk of the 50S ribosomal subunit. Forms a multimeric L10(L12)X complex, where L10 forms an elongated spine to which 2 to 4 L12 dimers bind in a sequential fashion. Binds GTP-bound translation factors.

Its subcellular location is the plastid. The protein localises to the chloroplast. In terms of biological role, forms part of the ribosomal stalk which helps the ribosome interact with GTP-bound translation factors. Is thus essential for accurate translation. The polypeptide is Large ribosomal subunit protein bL12c (Cyanidium caldarium (Red alga)).